The sequence spans 442 residues: MVQLPAMKRVKGRAPLSVVVAIIGGLALAGIIFTEDLRGLTEVKEKVTDKEKKRTSLRTVMRTSALLSADQPPPPAVLSVEPATATPPPAPKMAFNATRCSVTDGYWAYDRSKKLPYTDQTCPYVDRQDSCQRNGRPDSDYLYWDWHLDDCLLPRFDPVSMLEKLRGKRIMFVGDSLQLGQWLSFVCLVNSAVPDTPGAKSMERSRTLSVYTVKEYNASIEFYWAPFLVESNSDRNIALGAGGRVLHVDAIEEHGKHWRRADILVFDSYVWWMTGYRIKSVWGSFGDDGYEELDAWVAYRLGLKTWANWVDSNVDPATTRVFFMSISTTHMRSEDWGREGGIRCYNETWPITQRGYRGSGSDRRMMEVMSDVLGRMRTPVTLLNITQLTEHRVDAHVSVYTETGGLLVTDEEKTDPQRYTDCIHWCIPGVPDTWNRLLYAHL.

Residues 1–13 (MVQLPAMKRVKGR) lie on the Cytoplasmic side of the membrane. The chain crosses the membrane as a helical; Signal-anchor for type II membrane protein span at residues 14-34 (APLSVVVAIIGGLALAGIIFT). The Lumenal segment spans residues 35–442 (EDLRGLTEVK…TWNRLLYAHL (408 aa)). Residue N96 is glycosylated (N-linked (GlcNAc...) asparagine). 4 disulfide bridges follow: C100-C151, C122-C187, C131-C426, and C344-C422. The GDS motif motif lies at 174–176 (GDS). Catalysis depends on S176, which acts as the Nucleophile. N217, N346, and N384 each carry an N-linked (GlcNAc...) asparagine glycan. The active-site Proton donor is the D421. Positions 421-424 (DCIH) match the DXXH motif motif. The Proton acceptor role is filled by H424.

The protein belongs to the PC-esterase family. TBL subfamily.

It is found in the golgi apparatus membrane. Functionally, probable xylan acetyltransferase required for 2-O- and 3-O-monoacetylation of xylosyl residues in xylan. Possesses extremely low activity in vitro. This is Probable xylan O-acetyltransferase 8 from Oryza sativa subsp. japonica (Rice).